We begin with the raw amino-acid sequence, 94 residues long: Long neurotoxin LNTX37 (94 aa).

The N-terminal stretch at 1 to 21 is a signal peptide; that stretch reads MKTLLLTLVVVTIMCLDLGYT. Intrachain disulfides connect Cys-24/Cys-43, Cys-36/Cys-64, Cys-49/Cys-53, Cys-68/Cys-79, and Cys-80/Cys-85.

Belongs to the three-finger toxin family. Long-chain subfamily. Type II alpha-neurotoxin sub-subfamily. In terms of tissue distribution, expressed by the venom gland.

The protein localises to the secreted. Functionally, binds with high affinity to muscular (alpha-1/CHRNA1) and neuronal (alpha-7/CHRNA7) nicotinic acetylcholine receptor (nAChR) and inhibits acetylcholine from binding to the receptor, thereby impairing neuromuscular and neuronal transmission. The sequence is that of Long neurotoxin LNTX37 from Ophiophagus hannah (King cobra).